A 156-amino-acid chain; its full sequence is Small ribosomal subunit protein uS7 (156 aa).

This sequence belongs to the universal ribosomal protein uS7 family. Part of the 30S ribosomal subunit. Contacts proteins S9 and S11.

In terms of biological role, one of the primary rRNA binding proteins, it binds directly to 16S rRNA where it nucleates assembly of the head domain of the 30S subunit. Is located at the subunit interface close to the decoding center, probably blocks exit of the E-site tRNA. This chain is Small ribosomal subunit protein uS7, found in Nitrobacter hamburgensis (strain DSM 10229 / NCIMB 13809 / X14).